Here is an 83-residue protein sequence, read N- to C-terminus: High-potential iron-sulfur protein (83 aa).

Residues Cys-43, Cys-46, Cys-61, and Cys-75 each contribute to the [4Fe-4S] cluster site.

It belongs to the high-potential iron-sulfur protein (HiPIP) family. In terms of assembly, homodimer.

The protein resides in the periplasm. Functionally, specific class of high-redox-potential 4Fe-4S ferredoxins. Functions in anaerobic electron transport in most purple and in some other photosynthetic bacteria and in at least one genus (Paracoccus) of halophilic, denitrifying bacteria. The protein is High-potential iron-sulfur protein of Thiocystis violacea.